The primary structure comprises 234 residues: MNENMSFKELYAIVRHRFVLILLITIGVTLIMGFVQFKVISPTYQASTQVLVHESDGEENSNLSDIQRNLQYSSTFQSIMKSTALMEEVKAELHLSESASSLKGKVVTSSENESEIINVAVQDHDPAKAAEIANTLVNKFEKEVDERMNVQGVHILSEAKASESPMIKPARLRNMVMAFGAAVMGGITLAFFLHFLDDTCKSARQLSERTGLPCLGSVPDVHKGRNRGIKHFGE.

2 helical membrane passes run 20 to 40 (LILLITIGVTLIMGFVQFKVI) and 176 to 196 (VMAFGAAVMGGITLAFFLHFL).

It belongs to the CpsC/CapA family.

It is found in the cell membrane. This is an uncharacterized protein from Bacillus subtilis (strain 168).